Consider the following 133-residue polypeptide: Holo-[acyl-carrier-protein] synthase (133 aa).

Positions 8 and 56 each coordinate Mg(2+).

This sequence belongs to the P-Pant transferase superfamily. AcpS family. Mg(2+) is required as a cofactor.

It localises to the cytoplasm. The catalysed reaction is apo-[ACP] + CoA = holo-[ACP] + adenosine 3',5'-bisphosphate + H(+). Transfers the 4'-phosphopantetheine moiety from coenzyme A to a Ser of acyl-carrier-protein. This chain is Holo-[acyl-carrier-protein] synthase, found in Clostridium perfringens (strain 13 / Type A).